The sequence spans 58 residues: Protein translocase subunit SecE (58 aa).

The helical transmembrane segment at 38-58 (IVMAFVGLLAYLIQLVLAFII) threads the bilayer.

It belongs to the SecE/SEC61-gamma family. Component of the Sec protein translocase complex. Heterotrimer consisting of SecY (alpha), SecG (beta) and SecE (gamma) subunits. The heterotrimers can form oligomers, although 1 heterotrimer is thought to be able to translocate proteins. Interacts with the ribosome. May interact with SecDF, and other proteins may be involved.

Its subcellular location is the cell membrane. Functionally, essential subunit of the Sec protein translocation channel SecYEG. Clamps together the 2 halves of SecY. May contact the channel plug during translocation. The chain is Protein translocase subunit SecE from Acidianus ambivalens (Desulfurolobus ambivalens).